The sequence spans 2564 residues: Highly reducing polyketide synthase 40 (2564 aa).

The region spanning 8 to 432 is the Ketosynthase family 3 (KS3) domain; it reads PEPIAIIGMS…GTNAHVIVDR (425 aa). Residues cysteine 181, histidine 317, and histidine 358 each act as for beta-ketoacyl synthase activity in the active site. Positions 435–482 are disordered; sequence EHNHSNGTNGTNGTHHHNGTNGSNGNGTNGTNGTNGTDGFHDTESISD. Positions 439–455 are enriched in low complexity; sequence SNGTNGTNGTHHHNGTN. The segment covering 473 to 482 has biased composition (basic and acidic residues); it reads GFHDTESISD. A malonyl-CoA:ACP transacylase (MAT) domain region spans residues 580–914; it reads YVFGGQGAQY…SAAENMLRTL (335 aa). The interval 973–1113 is N-terminal hotdog fold; that stretch reads HELLGNLSAD…GRIRAVVDQG (141 aa). Positions 973-1280 are dehydratase (DH) domain; sequence HELLGNLSAD…GLRTAQLPSD (308 aa). One can recognise a PKS/mFAS DH domain in the interval 973-1283; the sequence is HELLGNLSAD…TAQLPSDVVN (311 aa). Histidine 1005 (proton acceptor; for dehydratase activity) is an active-site residue. The C-terminal hotdog fold stretch occupies residues 1130–1283; the sequence is AASVPHHITS…TAQLPSDVVN (154 aa). The active-site Proton donor; for dehydratase activity is aspartate 1199. Positions 1451 to 1556 are methyltransferase (CMet) domain; that stretch reads LEVGGGTASA…RQLLRPGGTL (106 aa). Residues 1854–2167 are enoyl reductase (ER) domain; it reads GLLETFRWVD…AGKHMGKVIL (314 aa). The ketoreductase (KR) domain stretch occupies residues 2191–2370; the sequence is ATYLLVGGFG…SFAIDVGVVS (180 aa). The region spanning 2472–2549 is the Carrier domain; that stretch reads EALDAVGQAV…ELIHLVAGKS (78 aa). O-(pantetheine 4'-phosphoryl)serine is present on serine 2509.

Its pathway is secondary metabolite biosynthesis. Functionally, highly reducing polyketide synthase; part of the gene cluster that mediates the biosynthesis of the lipopeptides W493 A and B. W493 A and B consist of six amino acid residues D-allo-thr, L-Ala, D-Ala, L-Gln, D-Tyr, and L-Val/L-Ile linked to a 3-hydroxy-4-methyltetradecanoic acid polyketide chain. The biosynthesis starts with formation of the linear polyketide chain by the highly reducing polyketide synthase PKS40. The gene cluster contains a putative acyl-CoA ligase (FPSE_09184) for formation of a CoA thioester polyketide. The thiol bond could be hydrolyzed by the putative thioesterase (FPSE_09186) and then accepted by the first T domain in module 1 of NRPS32. The second T domain is responsible for accepting a threonine, which is adenylated by the A domain and epimerized to the D-allo-threonine formed by the E domain. The five successive modules incorporate Ala, Ala, Gln, Tyr, and Val/Ile into the final product, which is released by cyclization. The polypeptide is Highly reducing polyketide synthase 40 (Fusarium pseudograminearum (strain CS3096) (Wheat and barley crown-rot fungus)).